A 253-amino-acid chain; its full sequence is Large ribosomal subunit protein uL10m (253 aa).

The transit peptide at 1 to 24 directs the protein to the mitochondrion; it reads MANLMQRSLPLTTTRTPVLQFLRF.

Belongs to the universal ribosomal protein uL10 family. In terms of assembly, component of the mitochondrial ribosome large subunit (39S) which comprises a 16S rRNA and about 50 distinct proteins.

Its subcellular location is the mitochondrion. The polypeptide is Large ribosomal subunit protein uL10m (mRpL10) (Drosophila pseudoobscura pseudoobscura (Fruit fly)).